Consider the following 203-residue polypeptide: Ribosomal RNA small subunit methyltransferase G (203 aa).

Residues Gly-73, Leu-78, 124–125 (VE), and Arg-139 contribute to the S-adenosyl-L-methionine site.

This sequence belongs to the methyltransferase superfamily. RNA methyltransferase RsmG family.

The protein resides in the cytoplasm. The catalysed reaction is guanosine(527) in 16S rRNA + S-adenosyl-L-methionine = N(7)-methylguanosine(527) in 16S rRNA + S-adenosyl-L-homocysteine. Functionally, specifically methylates the N7 position of guanine in position 527 of 16S rRNA. The polypeptide is Ribosomal RNA small subunit methyltransferase G (Haemophilus influenzae (strain 86-028NP)).